The sequence spans 668 residues: Tastin (668 aa).

3 disordered regions span residues 1 to 102, 154 to 177, and 189 to 285; these read MTTL…GGSN, ERKG…PRIP, and FSRL…GRHH. A Phosphoserine modification is found at serine 16. Polar residues-rich tracts occupy residues 27 to 37 and 55 to 64; these read QRCQDFSSVKS and PRSTQRQRPL. Serine 97 is modified (phosphoserine). Polar residues predominate over residues 158 to 168; the sequence is GTTQRGQSARS. Phosphoserine is present on serine 169. Basic and acidic residues-rich tracts occupy residues 227 to 246 and 269 to 282; these read ELRR…DRRT and GEQE…DGGG. 3 positions are modified to phosphoserine: serine 306, serine 324, and serine 338. Disordered stretches follow at residues 364 to 392 and 462 to 502; these read ITLQ…HQEL and TEPL…AEPE.

Directly binds bystin, and indirectly trophinin.

The protein resides in the cytoplasm. Its function is as follows. Could be involved with bystin and trophinin in a cell adhesion molecule complex that mediates an initial attachment of the blastocyst to uterine epithelial cells at the time of the embryo implantation. This Mus musculus (Mouse) protein is Tastin.